Consider the following 304-residue polypeptide: Secreted mono- and diacylglycerol lipase MDL4 (304 aa).

A signal peptide spans 1–19; the sequence is MRFGGVVSLVLGFIVSVLA. Residues C55 and C297 are joined by a disulfide bond. N-linked (GlcNAc...) asparagine glycans are attached at residues N102 and N161. S171 serves as the catalytic Nucleophile. The active site involves D228. N-linked (GlcNAc...) asparagine glycosylation is present at N253. Residue H281 is part of the active site.

The protein belongs to the AB hydrolase superfamily. Lipase family. Class 3 subfamily.

It localises to the secreted. The protein localises to the cell wall. The catalysed reaction is a monoacylglycerol + H2O = glycerol + a fatty acid + H(+). It catalyses the reaction a diacylglycerol + H2O = a monoacylglycerol + a fatty acid + H(+). Secreted lipase involved in Dandruff and seborrheic dermatitis (D/SD) probably via lipase-mediated breakdown of sebaceous lipids and release of irritating free fatty acids. Shows activity against monoglyceride and diglyceride substrates, but not triglyceride substrates and does not exhibit regio-selective production of diacylglycerols. Cleaves oleic acid from 1,2 isomers of diolein on both the 1 and the 2 position of the glycerol backbone, resulting mainly in free fatty acids but no monoolein is detected. Shows activity on monoolein and liberates mostly free fatty acids, but can also perform the reverse reaction and produce diolein. This Malassezia globosa (strain ATCC MYA-4612 / CBS 7966) (Dandruff-associated fungus) protein is Secreted mono- and diacylglycerol lipase MDL4.